The following is a 282-amino-acid chain: ATP phosphoribosyltransferase (282 aa).

This sequence belongs to the ATP phosphoribosyltransferase family. Long subfamily. The cofactor is Mg(2+).

Its subcellular location is the cytoplasm. It catalyses the reaction 1-(5-phospho-beta-D-ribosyl)-ATP + diphosphate = 5-phospho-alpha-D-ribose 1-diphosphate + ATP. It functions in the pathway amino-acid biosynthesis; L-histidine biosynthesis; L-histidine from 5-phospho-alpha-D-ribose 1-diphosphate: step 1/9. Its activity is regulated as follows. Feedback inhibited by histidine. Catalyzes the condensation of ATP and 5-phosphoribose 1-diphosphate to form N'-(5'-phosphoribosyl)-ATP (PR-ATP). Has a crucial role in the pathway because the rate of histidine biosynthesis seems to be controlled primarily by regulation of HisG enzymatic activity. The sequence is that of ATP phosphoribosyltransferase from Saccharopolyspora erythraea (strain ATCC 11635 / DSM 40517 / JCM 4748 / NBRC 13426 / NCIMB 8594 / NRRL 2338).